A 200-amino-acid chain; its full sequence is MTEKDAQPQLEEADDDLDSKLNYKPPPQKSLKELQEMDKDDESLTKYKKTLLGDVPVVADPTVPNVTVTRLSLVCDSAPGPITMDLTGDLEALKKDTFVLKEGIEYRVKINFKVNKDIVSGLKYVQHTYRTGMRVDKATFMVGSYGPRPEEYEFLTPVEEAPKGMLARGTYHNKSFFTDDDKQDHLTWEWNLAIKKDWTE.

The tract at residues 1 to 39 (MTEKDAQPQLEEADDDLDSKLNYKPPPQKSLKELQEMDK) is disordered. Thr2 carries the N-acetylthreonine modification. Lys20 carries the N6-acetyllysine modification. Tyr23 carries the post-translational modification Phosphotyrosine. Lys24, Lys39, Lys46, Lys101, and Lys123 each carry N6-acetyllysine. Positions 30 to 39 (SLKELQEMDK) are enriched in basic and acidic residues. Ser144 is modified (phosphoserine). Lys174 bears the N6-acetyllysine mark.

This sequence belongs to the Rho GDI family. In terms of assembly, interacts with RHOA. Interacts with RAC1. Interacts with RAC2. Interacts with CDC42. As to expression, preferentially expressed in hematopoietic cells.

The protein localises to the cytoplasm. Its subcellular location is the cytosol. Its function is as follows. Regulates the GDP/GTP exchange reaction of the Rho proteins by inhibiting the dissociation of GDP from them, and the subsequent binding of GTP to them. Regulates reorganization of the actin cytoskeleton mediated by Rho family members. This chain is Rho GDP-dissociation inhibitor 2 (Arhgdib), found in Mus musculus (Mouse).